An 83-amino-acid chain; its full sequence is Toxin TdNa3 (83 aa).

Positions 1 to 20 (MKGMIMLISCLMLIDVVVES) are cleaved as a signal peptide. In terms of domain architecture, LCN-type CS-alpha/beta spans 21-82 (KNGYIIEPKG…IFDYYNNKCG (62 aa)). 4 disulfides stabilise this stretch: Cys-31–Cys-81, Cys-35–Cys-57, Cys-43–Cys-62, and Cys-47–Cys-64. Cysteine amide is present on Cys-81.

Belongs to the long (4 C-C) scorpion toxin superfamily. Sodium channel inhibitor family. Beta subfamily. Expressed by the venom gland.

Its subcellular location is the secreted. In terms of biological role, inhibits the sodium currents (Nav) in an apparent irreversible manner. Produces small depolarization and induces repetitive firing in squid axons. Is specific for arthropods (crickets, triatomides, crabs and squids), but is non-toxic to mice. The chain is Toxin TdNa3 from Tityus discrepans (Venezuelan scorpion).